The primary structure comprises 233 residues: Chaperone protein MrkB (233 aa).

Positions 1-18 (MKRIALFFCFIFSFAAHA) are cleaved as a signal peptide.

It belongs to the periplasmic pilus chaperone family.

It is found in the periplasm. Mediates assembly of pili by forming soluble multimeric complexes with pili subunits as an intermediate step in the assembly process. This protein is involved in type 3 pili assembly. This chain is Chaperone protein MrkB (mrkB), found in Klebsiella pneumoniae.